Here is a 341-residue protein sequence, read N- to C-terminus: UDP-N-acetyl-alpha-D-glucosaminouronate 4-epimerase (341 aa).

Phenylalanine 27, isoleucine 28, aspartate 47, alanine 50, threonine 51, glycine 52, aspartate 78, isoleucine 79, and glutamine 98 together coordinate NAD(+). Serine 103 lines the UDP-N-acetyl-alpha-D-galactosamine pocket. An NAD(+)-binding site is contributed by threonine 117. Serine 142, serine 143, and tyrosine 166 together coordinate UDP-N-acetyl-alpha-D-galactosamine. NAD(+)-binding residues include tyrosine 166 and lysine 170. Residue tyrosine 166 is the Proton acceptor of the active site. Asparagine 195 provides a ligand contact to UDP-N-acetyl-alpha-D-galactosamine. Valine 196 is a binding site for NAD(+). Residues valine 210, tyrosine 225, asparagine 227, arginine 234, arginine 299, and aspartate 302 each coordinate UDP-N-acetyl-alpha-D-galactosamine.

This sequence belongs to the NAD(P)-dependent epimerase/dehydratase family. Homodimer. NAD(+) serves as cofactor.

It carries out the reaction UDP-2-acetamido-2-deoxy-alpha-D-glucuronate = UDP-2-acetamido-2-deoxy-alpha-D-galacturonate. The catalysed reaction is UDP-N-acetyl-alpha-D-glucosamine = UDP-N-acetyl-alpha-D-galactosamine. It participates in bacterial outer membrane biogenesis; LPS O-antigen biosynthesis. Its function is as follows. Epimerase required for the biosynthesis of the B-band O antigen of serotype O6 lipopolysaccharide. Catalyzes the reversible epimerization of UDP-N-acetylglucosaminuronic acid (UDP-GlcNAcA) to UDP-N-acetylgalactosaminuronic acid (UDP-GalNAcA). Also catalyzes the reversible epimerization of UDP-N-acetylglucosamine (UDP-GlcNAc) to UDP-N-acetylgalactosamine (UDP-GalNAc). Has very low epimerase activity with UDP-glucose (UDP-Glc) and UDP-galactose (UDP-Gal). This chain is UDP-N-acetyl-alpha-D-glucosaminouronate 4-epimerase, found in Pseudomonas aeruginosa.